A 952-amino-acid polypeptide reads, in one-letter code: Isoleucine--tRNA ligase (952 aa).

A 'HIGH' region motif is present at residues 58 to 68 (PYANGDIHIGH). L-isoleucyl-5'-AMP is bound at residue Glu576. Positions 617–621 (KMSKS) match the 'KMSKS' region motif. An ATP-binding site is contributed by Lys620. Zn(2+) contacts are provided by Cys915, Cys918, Cys935, and Cys938.

Belongs to the class-I aminoacyl-tRNA synthetase family. IleS type 1 subfamily. As to quaternary structure, monomer. It depends on Zn(2+) as a cofactor.

It localises to the cytoplasm. The catalysed reaction is tRNA(Ile) + L-isoleucine + ATP = L-isoleucyl-tRNA(Ile) + AMP + diphosphate. Catalyzes the attachment of isoleucine to tRNA(Ile). As IleRS can inadvertently accommodate and process structurally similar amino acids such as valine, to avoid such errors it has two additional distinct tRNA(Ile)-dependent editing activities. One activity is designated as 'pretransfer' editing and involves the hydrolysis of activated Val-AMP. The other activity is designated 'posttransfer' editing and involves deacylation of mischarged Val-tRNA(Ile). This chain is Isoleucine--tRNA ligase, found in Vibrio atlanticus (strain LGP32) (Vibrio splendidus (strain Mel32)).